Here is a 590-residue protein sequence, read N- to C-terminus: Proline--tRNA ligase (590 aa).

Belongs to the class-II aminoacyl-tRNA synthetase family. ProS type 1 subfamily. Homodimer.

The protein localises to the cytoplasm. It carries out the reaction tRNA(Pro) + L-proline + ATP = L-prolyl-tRNA(Pro) + AMP + diphosphate. Functionally, catalyzes the attachment of proline to tRNA(Pro) in a two-step reaction: proline is first activated by ATP to form Pro-AMP and then transferred to the acceptor end of tRNA(Pro). As ProRS can inadvertently accommodate and process non-cognate amino acids such as alanine and cysteine, to avoid such errors it has two additional distinct editing activities against alanine. One activity is designated as 'pretransfer' editing and involves the tRNA(Pro)-independent hydrolysis of activated Ala-AMP. The other activity is designated 'posttransfer' editing and involves deacylation of mischarged Ala-tRNA(Pro). The misacylated Cys-tRNA(Pro) is not edited by ProRS. In Clavibacter sepedonicus (Clavibacter michiganensis subsp. sepedonicus), this protein is Proline--tRNA ligase.